The sequence spans 133 residues: ATP synthase epsilon chain, chloroplastic (133 aa).

This sequence belongs to the ATPase epsilon chain family. As to quaternary structure, F-type ATPases have 2 components, CF(1) - the catalytic core - and CF(0) - the membrane proton channel. CF(1) has five subunits: alpha(3), beta(3), gamma(1), delta(1), epsilon(1). CF(0) has three main subunits: a, b and c.

Its subcellular location is the plastid. It is found in the chloroplast thylakoid membrane. In terms of biological role, produces ATP from ADP in the presence of a proton gradient across the membrane. The chain is ATP synthase epsilon chain, chloroplastic from Psilotum nudum (Whisk fern).